We begin with the raw amino-acid sequence, 403 residues long: S-adenosylmethionine synthase (403 aa).

His-16 lines the ATP pocket. Mg(2+) is bound at residue Asp-18. Glu-44 is a K(+) binding site. Residues Glu-57 and Gln-110 each contribute to the L-methionine site. A flexible loop region spans residues 110-120 (QSAHIAQGVDA). Residues 175–177 (DSK), Asp-253, 259–260 (RK), Ala-276, and Lys-280 each bind ATP. Asp-253 lines the L-methionine pocket. Position 284 (Lys-284) interacts with L-methionine.

Belongs to the AdoMet synthase family. In terms of assembly, homotetramer; dimer of dimers. It depends on Mg(2+) as a cofactor. The cofactor is K(+).

It localises to the cytoplasm. The catalysed reaction is L-methionine + ATP + H2O = S-adenosyl-L-methionine + phosphate + diphosphate. The protein operates within amino-acid biosynthesis; S-adenosyl-L-methionine biosynthesis; S-adenosyl-L-methionine from L-methionine: step 1/1. Catalyzes the formation of S-adenosylmethionine (AdoMet) from methionine and ATP. The overall synthetic reaction is composed of two sequential steps, AdoMet formation and the subsequent tripolyphosphate hydrolysis which occurs prior to release of AdoMet from the enzyme. The protein is S-adenosylmethionine synthase of Erythrobacter litoralis (strain HTCC2594).